Reading from the N-terminus, the 175-residue chain is DM domain-containing protein mab-23 (175 aa).

Residues 8–56 (CQLCANHGIFNQPKKGHKQKCPYRTCPCSLCALNTKRRALDQIERQLKH) constitute a DNA-binding region (DM). The tract at residues 58–93 (NEPMTGQTATSMASPTPECPLSPTTPKMTPHTPTSG) is disordered. A compositionally biased stretch (polar residues) spans 59-71 (EPMTGQTATSMAS). Low complexity predominate over residues 81-91 (TTPKMTPHTPT).

Expressed in a limited number of non-sex-specific tissues in males, including 6-8 unidentified neurons of the head, ventral body wall muscle, and the PHCL/R neurons.

Its subcellular location is the nucleus. In terms of biological role, probable transcription factor that plays a role in the development of the dopaminergic neurons of the male-specific genital sensilla (simple sense organs) known as rays, by negatively regulating the activity of the transcription factor ast-1. Involved in male mating behavior, probably as a result of a role in the differentiation of male-specific diagonal muscles. Required for development of the male proctodeum. May be dispensable in hermaphrodites. In Caenorhabditis elegans, this protein is DM domain-containing protein mab-23.